Here is a 323-residue protein sequence, read N- to C-terminus: Breast cancer metastasis-suppressor 1-like protein-A (323 aa).

Residues 1-15 (MPVHSREKKESNHEE) show a composition bias toward basic and acidic residues. The interval 1 to 52 (MPVHSREKKESNHEEMEVDFAEQEGSSSEDEDTESSSVSEDGESSEMDDEDC) is disordered. Residues 16 to 51 (MEVDFAEQEGSSSEDEDTESSSVSEDGESSEMDDED) show a composition bias toward acidic residues. Coiled coils occupy residues 50–81 (EDCE…YKER) and 156–178 (QTEL…ITSE).

It belongs to the BRMS1 family.

Its subcellular location is the nucleus. Involved in the histone deacetylase (HDAC1)-dependent transcriptional repression activity. The chain is Breast cancer metastasis-suppressor 1-like protein-A (brms1la) from Danio rerio (Zebrafish).